We begin with the raw amino-acid sequence, 288 residues long: Diaminopimelate epimerase (288 aa).

Positions 13, 46, and 66 each coordinate substrate. Cys-75 acts as the Proton donor in catalysis. Substrate-binding positions include Gly-76–Asn-77, Asn-166, Asn-199, and Glu-217–Arg-218. Catalysis depends on Cys-226, which acts as the Proton acceptor. Gly-227 to Thr-228 contacts substrate.

The protein belongs to the diaminopimelate epimerase family. As to quaternary structure, homodimer.

It localises to the cytoplasm. It catalyses the reaction (2S,6S)-2,6-diaminopimelate = meso-2,6-diaminopimelate. Its pathway is amino-acid biosynthesis; L-lysine biosynthesis via DAP pathway; DL-2,6-diaminopimelate from LL-2,6-diaminopimelate: step 1/1. Its function is as follows. Catalyzes the stereoinversion of LL-2,6-diaminopimelate (L,L-DAP) to meso-diaminopimelate (meso-DAP), a precursor of L-lysine and an essential component of the bacterial peptidoglycan. This Cupriavidus metallidurans (strain ATCC 43123 / DSM 2839 / NBRC 102507 / CH34) (Ralstonia metallidurans) protein is Diaminopimelate epimerase.